Reading from the N-terminus, the 25-residue chain is Histone H4 (25 aa).

Gly residues predominate over residues 1 to 14; it reads MSGRGKGGKGLGKG. Positions 1–25 are disordered; that stretch reads MSGRGKGGKGLGKGGAKRHRKVLRD. Position 2 is an N-acetylserine (S2). N6-acetyllysine is present on residues K6, K9, K13, K17, and K21. Residues 15–25 show a composition bias toward basic residues; the sequence is GAKRHRKVLRD. The DNA-binding element occupies 17 to 21; sequence KRHRK.

The protein belongs to the histone H4 family. In terms of assembly, the nucleosome is a histone octamer containing two molecules each of H2A, H2B, H3 and H4 assembled in one H3-H4 heterotetramer and two H2A-H2B heterodimers. The octamer wraps approximately 147 bp of DNA.

The protein resides in the nucleus. The protein localises to the chromosome. Functionally, core component of nucleosome. Nucleosomes wrap and compact DNA into chromatin, limiting DNA accessibility to the cellular machineries which require DNA as a template. Histones thereby play a central role in transcription regulation, DNA repair, DNA replication and chromosomal stability. DNA accessibility is regulated via a complex set of post-translational modifications of histones, also called histone code, and nucleosome remodeling. This is Histone H4 from Medicago sativa (Alfalfa).